The following is an 82-amino-acid chain: Probable acyl carrier protein IacP (82 aa).

The region spanning 3–78 is the Carrier domain; that stretch reads MDIEARVKKV…DICRVVKKSL (76 aa). Residue serine 38 is modified to O-(pantetheine 4'-phosphoryl)serine.

In terms of processing, 4'-phosphopantetheine is transferred from CoA to a specific serine of apo-IacP.

Its subcellular location is the cytoplasm. In terms of biological role, acyl carrier protein. The protein is Probable acyl carrier protein IacP (iacP) of Salmonella typhimurium (strain SL1344).